Consider the following 316-residue polypeptide: Transcription initiation factor IIB (316 aa).

The segment at 11-42 (PRVTCPNHPDAILVEDYRAGDMICPECGLVVG) adopts a TFIIB-type zinc-finger fold. Residues cysteine 15, histidine 18, cysteine 34, and cysteine 37 each coordinate Zn(2+). Residues serine 70, serine 76, and serine 92 each carry the phosphoserine modification. A run of 2 repeats spans residues 124-200 (MADR…LILK) and 218-294 (FCSN…LIYP). Lysine 152, arginine 154, lysine 189, and lysine 196 together coordinate DNA. Positions 189–193 (KEIGR) are core promoter DNA-binding. Residue lysine 238 is modified to N6-acetyllysine; by autocatalysis. The necessary for TATA box-bound TBP complex formation stretch occupies residues 244–316 (LVPGRSPISV…DTPVDKLPQL (73 aa)). Arginine 248 provides a ligand contact to DNA. The interval 249–252 (SPIS) is core promoter DNA-binding. DNA is bound by residues lysine 272, alanine 281, threonine 284, arginine 286, and arginine 290. Positions 283 to 286 (VTIR) are core promoter DNA-binding.

The protein belongs to the TFIIB family. In terms of assembly, found in a ternary complex with TATA box-bound TBP. Part of a TFIID-containing RNA polymerase II pre-initiation complex (PIC) that is composed of TBP and at least GTF2A1, GTF2A2, GTF2E1, GTF2E2, GTF2F1, GTF2H2, GTF2H3, GTF2H4, GTF2H5, GTF2B, TCEA1, ERCC2, ERCC3, TAF1, TAF2, TAF3, TAF4, TAF5, TAF6, TAF7, TAF8, TAF9, TAF10, TAF11, TAF12 and TAF13. Associates with TFIID-TFIIA (DA complex) to form TFIID-TFIIA-TFIIB (DAB complex), which is then recognized by RNA polymerase II (Pol II). Found in a RNA polymerase II initiation complex. Interacts (via C-terminus) with TBP; this interaction with TATA box-bound TBP guides Pol II into the PIC. Interacts (via N-terminus) with Pol II. Interacts (via C-terminus) with SSU72; this interaction is inhibited by SYMPK. Interacts with NR2F1; this interaction is direct. Interacts with PGR. Interacts with ESR1. Interacts with GTF2F1 (via C-terminus and preferentially via acetylated form); this interaction prevents binding of GTF2B to GTF2F2. Interacts with GTF2F2 (via N-terminus); this interaction is inhibited in presence of GTF2F1. Interacts with the transcription elongation factor TCEA2. Interacts with HSF1 (via transactivation domain). Interacts with GPBP1. Acetylated. Autoacetylated; autoacetylation at Lys-238 stimulates transcription activation.

The protein localises to the nucleus. It is found in the chromosome. It catalyses the reaction L-lysyl-[protein] + acetyl-CoA = N(6)-acetyl-L-lysyl-[protein] + CoA + H(+). In terms of biological role, general transcription factor that plays a role in transcription initiation by RNA polymerase II (Pol II). Involved in the pre-initiation complex (PIC) formation and Pol II recruitment at promoter DNA. Together with the TATA box-bound TBP forms the core initiation complex and provides a bridge between TBP and the Pol II-TFIIF complex. Released from the PIC early following the onset of transcription during the initiation and elongation transition and reassociates with TBP during the next transcription cycle. Associates with chromatin to core promoter-specific regions. Binds to two distinct DNA core promoter consensus sequence elements in a TBP-independent manner; these IIB-recognition elements (BREs) are localized immediately upstream (BREu), 5'-[GC][GC][GA]CGCC-3', and downstream (BREd), 5'-[GA]T[TGA][TG][GT][TG][TG]-3', of the TATA box element. Modulates transcription start site selection. Also exhibits autoacetyltransferase activity that contributes to the activated transcription. The protein is Transcription initiation factor IIB of Mus musculus (Mouse).